Consider the following 166-residue polypeptide: MREFSRTDRVAQQIQKEIAVILQREIKDPRLGMVTVSAVEVSRDLSYAKIFITVFNTQDDNAAKQSANVLNEATGYIRSLLGKRIRARIMPELKFLVDNSLMEGMRISNLVDSIIREDNAKHVADETDVEDSTDHEDDVTNSEDETKHVDIDTDSEEGTNTDGKAQ.

Residues 122 to 166 (HVADETDVEDSTDHEDDVTNSEDETKHVDIDTDSEEGTNTDGKAQ) form a disordered region. The segment covering 126-143 (ETDVEDSTDHEDDVTNSE) has biased composition (acidic residues).

The protein belongs to the RbfA family. Monomer. Binds 30S ribosomal subunits, but not 50S ribosomal subunits or 70S ribosomes.

It is found in the cytoplasm. Functionally, one of several proteins that assist in the late maturation steps of the functional core of the 30S ribosomal subunit. Associates with free 30S ribosomal subunits (but not with 30S subunits that are part of 70S ribosomes or polysomes). Required for efficient processing of 16S rRNA. May interact with the 5'-terminal helix region of 16S rRNA. This chain is Ribosome-binding factor A, found in Pseudoalteromonas translucida (strain TAC 125).